The sequence spans 729 residues: Phosphoribosylformylglycinamidine synthase subunit PurL (729 aa).

His-54 is an active-site residue. ATP-binding residues include Tyr-57 and Lys-96. Glu-98 is a Mg(2+) binding site. Residues 99–102 (SHNH) and Arg-121 contribute to the substrate site. The active-site Proton acceptor is the His-100. Residue Asp-122 participates in Mg(2+) binding. Gln-245 serves as a coordination point for substrate. Asp-273 is a Mg(2+) binding site. 317–319 (ETQ) provides a ligand contact to substrate. The ATP site is built by Asp-495 and Gly-532. Asn-533 provides a ligand contact to Mg(2+). Ser-535 is a binding site for substrate.

The protein belongs to the FGAMS family. As to quaternary structure, monomer. Part of the FGAM synthase complex composed of 1 PurL, 1 PurQ and 2 PurS subunits.

The protein localises to the cytoplasm. The catalysed reaction is N(2)-formyl-N(1)-(5-phospho-beta-D-ribosyl)glycinamide + L-glutamine + ATP + H2O = 2-formamido-N(1)-(5-O-phospho-beta-D-ribosyl)acetamidine + L-glutamate + ADP + phosphate + H(+). It participates in purine metabolism; IMP biosynthesis via de novo pathway; 5-amino-1-(5-phospho-D-ribosyl)imidazole from N(2)-formyl-N(1)-(5-phospho-D-ribosyl)glycinamide: step 1/2. Part of the phosphoribosylformylglycinamidine synthase complex involved in the purines biosynthetic pathway. Catalyzes the ATP-dependent conversion of formylglycinamide ribonucleotide (FGAR) and glutamine to yield formylglycinamidine ribonucleotide (FGAM) and glutamate. The FGAM synthase complex is composed of three subunits. PurQ produces an ammonia molecule by converting glutamine to glutamate. PurL transfers the ammonia molecule to FGAR to form FGAM in an ATP-dependent manner. PurS interacts with PurQ and PurL and is thought to assist in the transfer of the ammonia molecule from PurQ to PurL. The polypeptide is Phosphoribosylformylglycinamidine synthase subunit PurL (Staphylococcus aureus (strain bovine RF122 / ET3-1)).